The sequence spans 920 residues: Probable transport protein MmpL7 (920 aa).

Transmembrane regions (helical) follow at residues Leu-44 to Thr-64, Ile-210 to Leu-230, Ala-241 to Val-261, Val-271 to Leu-291, Leu-311 to Ala-331, Leu-344 to Ala-364, Ser-389 to Met-409, Leu-761 to Met-781, Ala-790 to Trp-810, Val-822 to Ile-842, Gly-864 to Ser-884, and Phe-888 to Val-908.

This sequence belongs to the resistance-nodulation-cell division (RND) (TC 2.A.6) family. MmpL subfamily.

Its subcellular location is the cell membrane. This is Probable transport protein MmpL7 (mmpL7) from Mycobacterium bovis (strain ATCC BAA-935 / AF2122/97).